Consider the following 100-residue polypeptide: UPF0251 protein VVA1436 (100 aa).

This sequence belongs to the UPF0251 family.

The protein is UPF0251 protein VVA1436 of Vibrio vulnificus (strain YJ016).